A 206-amino-acid chain; its full sequence is LexA repressor (206 aa).

Positions 28–48 (RAEIARRLGFKSANAAEEHLK) form a DNA-binding region, H-T-H motif. Residues Ser123 and Lys160 each act as for autocatalytic cleavage activity in the active site.

The protein belongs to the peptidase S24 family. As to quaternary structure, homodimer.

It carries out the reaction Hydrolysis of Ala-|-Gly bond in repressor LexA.. Its function is as follows. Represses a number of genes involved in the response to DNA damage (SOS response), including recA and lexA. In the presence of single-stranded DNA, RecA interacts with LexA causing an autocatalytic cleavage which disrupts the DNA-binding part of LexA, leading to derepression of the SOS regulon and eventually DNA repair. The polypeptide is LexA repressor (Shewanella pealeana (strain ATCC 700345 / ANG-SQ1)).